The chain runs to 220 residues: UPF0319 protein YccT (220 aa).

A signal peptide spans M1–A20.

The protein belongs to the UPF0319 family.

The chain is UPF0319 protein YccT from Salmonella choleraesuis (strain SC-B67).